The following is a 370-amino-acid chain: uncharacterized protein (370 aa).

A signal peptide spans 1-27 (MSSAANEGCVYLFIVVLRLSSFSCVNS). N59, N98, and N126 each carry an N-linked (GlcNAc...) asparagine glycan. 2 disordered regions span residues 81 to 101 (SRSH…NTTA) and 123 to 167 (LSEN…CHQP). The span at 139–148 (HDDDDDDDLE) shows a compositional bias: acidic residues. N171, N221, N230, and N262 each carry an N-linked (GlcNAc...) asparagine glycan.

This is an uncharacterized protein from Saccharomyces cerevisiae (strain ATCC 204508 / S288c) (Baker's yeast).